Consider the following 370-residue polypeptide: MSLHQFLLEPITCHAWNRDRTQIALSPNNHEVHIYKKNGSQWTKAHELKEHNGHITGIDWAPKSDRIVTCGADRNAYVWSQKDGIWKPTLVILRINRAATFVKWSPLENKFAVGSGARLISVCYFESENDWWVSKHIKKPIRSTVLSLDWHPNNVLLAAGSCDFKCRVFSAYIKEVDEKPASTPWGSKMPFGQLMSEFGGSGTGGWVHGVSFSASGNRLAWVSHDSTVSVADASKSVQVSTLRTEFLPLLSVSFVSENSVVAAGHDCCPMLFNYDDRGCLTFVSKLDVPKQSIQRNMSAMERFRNMDKRATTEDRNTALETLHQNSITQVSIYEVDKQDCRKFCTTGIDGAMTIWDFKTLESSIQGLRIM.

WD repeat units follow at residues 6–45 (FLLE…WTKA), 50–89 (EHNG…WKPT), 140–179 (PIRS…VDEK), 202–241 (GTGG…QVST), 244–284 (TEFL…TFVS), and 322–365 (LHQN…SSIQ).

Belongs to the WD repeat ARPC1 family. In terms of assembly, probable component of the Arp2/3 complex in which it may replace ARPC1B.

It is found in the cytoplasm. The protein localises to the cytoskeleton. Its subcellular location is the nucleus. Its function is as follows. Probably functions as a component of the Arp2/3 complex which is involved in regulation of actin polymerization and together with an activating nucleation-promoting factor (NPF) mediates the formation of branched actin networks. In addition to its role in the cytoplasmic cytoskeleton, the Arp2/3 complex also promotes actin polymerization in the nucleus, thereby regulating gene transcription and repair of damaged DNA. The protein is Actin-related protein 2/3 complex subunit 1A (Arpc1a) of Mus musculus (Mouse).